Here is a 306-residue protein sequence, read N- to C-terminus: Ethylmalonyl-CoA decarboxylase (306 aa).

N6-acetyllysine; alternate is present on lysine 216. An N6-succinyllysine; alternate modification is found at lysine 216.

Belongs to the enoyl-CoA hydratase/isomerase family.

The protein localises to the cytoplasm. Its subcellular location is the cytosol. The catalysed reaction is (2S)-ethylmalonyl-CoA + H(+) = butanoyl-CoA + CO2. It carries out the reaction (S)-methylmalonyl-CoA + H(+) = propanoyl-CoA + CO2. The enzyme catalyses (2R)-ethylmalonyl-CoA + H(+) = butanoyl-CoA + CO2. Its function is as follows. Decarboxylates ethylmalonyl-CoA, a potentially toxic metabolite, to form butyryl-CoA, suggesting it might be involved in metabolite proofreading. Acts preferentially on (S)-ethylmalonyl-CoA but also has some activity on the (R)-isomer. Also has methylmalonyl-CoA decarboxylase activity at lower level. The chain is Ethylmalonyl-CoA decarboxylase (ECHDC1) from Bos taurus (Bovine).